The following is a 211-amino-acid chain: Large ribosomal subunit protein eL13 (211 aa).

Lys-16 is subject to N6-acetyllysine. Residues Ser-52, Ser-77, and Ser-106 each carry the phosphoserine modification. Residues Lys-123 and Lys-145 each participate in a glycyl lysine isopeptide (Lys-Gly) (interchain with G-Cter in SUMO2) cross-link. Lys-174 participates in a covalent cross-link: Glycyl lysine isopeptide (Lys-Gly) (interchain with G-Cter in SUMO1); alternate. Residues Lys-174 and Lys-177 each participate in a glycyl lysine isopeptide (Lys-Gly) (interchain with G-Cter in SUMO2); alternate cross-link. Residue Lys-177 is modified to N6-acetyllysine; alternate.

The protein belongs to the eukaryotic ribosomal protein eL13 family. Component of the 60S large ribosomal subunit (LSU).

It is found in the cytoplasm. Its function is as follows. Component of the ribosome, a large ribonucleoprotein complex responsible for the synthesis of proteins in the cell. The small ribosomal subunit (SSU) binds messenger RNAs (mRNAs) and translates the encoded message by selecting cognate aminoacyl-transfer RNA (tRNA) molecules. The large subunit (LSU) contains the ribosomal catalytic site termed the peptidyl transferase center (PTC), which catalyzes the formation of peptide bonds, thereby polymerizing the amino acids delivered by tRNAs into a polypeptide chain. The nascent polypeptides leave the ribosome through a tunnel in the LSU and interact with protein factors that function in enzymatic processing, targeting, and the membrane insertion of nascent chains at the exit of the ribosomal tunnel. As part of the LSU, it is probably required for its formation and the maturation of rRNAs. Plays a role in bone development. This is Large ribosomal subunit protein eL13 (RPL13) from Cricetulus griseus (Chinese hamster).